We begin with the raw amino-acid sequence, 484 residues long: Cobyric acid synthase (484 aa).

The GATase cobBQ-type domain maps to 248-435; that stretch reads VLKVIVPVLP…LHGLFEGSQS (188 aa). C329 acts as the Nucleophile in catalysis. H427 is an active-site residue.

It belongs to the CobB/CobQ family. CobQ subfamily.

Its pathway is cofactor biosynthesis; adenosylcobalamin biosynthesis. Functionally, catalyzes amidations at positions B, D, E, and G on adenosylcobyrinic A,C-diamide. NH(2) groups are provided by glutamine, and one molecule of ATP is hydrogenolyzed for each amidation. This is Cobyric acid synthase from Pseudomonas putida (strain W619).